The following is a 224-amino-acid chain: Phosphoribosylformylglycinamidine synthase subunit PurQ (224 aa).

The Glutamine amidotransferase type-1 domain maps to Lys-2–Ala-224. Cys-86 serves as the catalytic Nucleophile. Residues His-200 and Glu-202 contribute to the active site.

Part of the FGAM synthase complex composed of 1 PurL, 1 PurQ and 2 PurS subunits.

The protein localises to the cytoplasm. It carries out the reaction N(2)-formyl-N(1)-(5-phospho-beta-D-ribosyl)glycinamide + L-glutamine + ATP + H2O = 2-formamido-N(1)-(5-O-phospho-beta-D-ribosyl)acetamidine + L-glutamate + ADP + phosphate + H(+). The catalysed reaction is L-glutamine + H2O = L-glutamate + NH4(+). Its pathway is purine metabolism; IMP biosynthesis via de novo pathway; 5-amino-1-(5-phospho-D-ribosyl)imidazole from N(2)-formyl-N(1)-(5-phospho-D-ribosyl)glycinamide: step 1/2. Functionally, part of the phosphoribosylformylglycinamidine synthase complex involved in the purines biosynthetic pathway. Catalyzes the ATP-dependent conversion of formylglycinamide ribonucleotide (FGAR) and glutamine to yield formylglycinamidine ribonucleotide (FGAM) and glutamate. The FGAM synthase complex is composed of three subunits. PurQ produces an ammonia molecule by converting glutamine to glutamate. PurL transfers the ammonia molecule to FGAR to form FGAM in an ATP-dependent manner. PurS interacts with PurQ and PurL and is thought to assist in the transfer of the ammonia molecule from PurQ to PurL. The sequence is that of Phosphoribosylformylglycinamidine synthase subunit PurQ from Sulfurimonas denitrificans (strain ATCC 33889 / DSM 1251) (Thiomicrospira denitrificans (strain ATCC 33889 / DSM 1251)).